Here is a 485-residue protein sequence, read N- to C-terminus: Glutamyl-tRNA(Gln) amidotransferase subunit A (485 aa).

Residues Lys79 and Ser154 each act as charge relay system in the active site. The active-site Acyl-ester intermediate is the Ser178.

It belongs to the amidase family. GatA subfamily. Heterotrimer of A, B and C subunits.

It carries out the reaction L-glutamyl-tRNA(Gln) + L-glutamine + ATP + H2O = L-glutaminyl-tRNA(Gln) + L-glutamate + ADP + phosphate + H(+). Its function is as follows. Allows the formation of correctly charged Gln-tRNA(Gln) through the transamidation of misacylated Glu-tRNA(Gln) in organisms which lack glutaminyl-tRNA synthetase. The reaction takes place in the presence of glutamine and ATP through an activated gamma-phospho-Glu-tRNA(Gln). The sequence is that of Glutamyl-tRNA(Gln) amidotransferase subunit A from Desulforamulus reducens (strain ATCC BAA-1160 / DSM 100696 / MI-1) (Desulfotomaculum reducens).